The following is a 200-amino-acid chain: Lipopolysaccharide core heptose(II)-phosphate phosphatase (200 aa).

The first 25 residues, 1 to 25 (MLAFCRSSLKSKKYFIILLALAAIA), serve as a signal peptide directing secretion.

Belongs to the phosphoglycerate mutase family. Ais subfamily.

The protein resides in the periplasm. The protein operates within bacterial outer membrane biogenesis; lipopolysaccharide metabolism. In terms of biological role, catalyzes the dephosphorylation of heptose(II) of the outer membrane lipopolysaccharide core. The protein is Lipopolysaccharide core heptose(II)-phosphate phosphatase of Escherichia coli O157:H7 (strain EC4115 / EHEC).